The primary structure comprises 612 residues: Zinc metalloproteinase-disintegrin-like 2d (612 aa).

Residues 1-20 form the signal peptide; the sequence is MIQVLLVTICLAVFPYQGSS. Residues 21–189 constitute a propeptide that is removed on maturation; sequence IILGSGNVND…KKASQLNLTP (169 aa). Residues 199-395 enclose the Peptidase M12B domain; it reads KYIELVIVAD…NRPPCILNKP (197 aa). Glu202 lines the Ca(2+) pocket. A glycan (N-linked (GlcNAc...) asparagine) is linked at Asn218. Ca(2+) is bound at residue Asp286. Cystine bridges form between Cys310-Cys390, Cys350-Cys374, and Cys352-Cys357. His335 contributes to the Zn(2+) binding site. The active site involves Glu336. Zn(2+)-binding residues include His339 and His345. Ca(2+) is bound by residues Cys390, Asn393, Val405, Asn408, Phe410, Glu412, Glu415, and Asp418. The Disintegrin domain occupies 403 to 489; the sequence is PPVCGNYFVE…DCPTDNFQRN (87 aa). Intrachain disulfides connect Cys406-Cys435, Cys417-Cys430, Cys419-Cys425, Cys429-Cys452, Cys443-Cys449, Cys448-Cys474, Cys461-Cys481, Cys468-Cys500, Cys493-Cys505, Cys512-Cys562, Cys527-Cys573, Cys540-Cys550, Cys557-Cys599, and Cys593-Cys605. The D/ECD-tripeptide motif lies at 467 to 469; it reads ECD.

The protein belongs to the venom metalloproteinase (M12B) family. P-III subfamily. The cofactor is Zn(2+). Expressed by the venom gland.

Its subcellular location is the secreted. Its function is as follows. Snake venom metalloproteinase that impairs hemostasis in the envenomed animal. This is Zinc metalloproteinase-disintegrin-like 2d from Crotalus adamanteus (Eastern diamondback rattlesnake).